The sequence spans 740 residues: Ribosomal protein S6 kinase alpha-3 (740 aa).

The disordered stretch occupies residues 1 to 38; that stretch reads MPLAQLADPWQKMAVESPSDSAENGQQIMDEPMGEEEI. A compositionally biased stretch (polar residues) spans 18-27; sequence PSDSAENGQQ. The 260-residue stretch at 68 to 327 folds into the Protein kinase 1 domain; that stretch reads FELLKVLGQG…VEEIKRHSFF (260 aa). Residues 74-82 and Lys100 contribute to the ATP site; that span reads LGQGSFGKV. Asp193 functions as the Proton acceptor in the catalytic mechanism. Position 227 is a phosphoserine; by PDPK1 (Ser227). An AGC-kinase C-terminal domain is found at 328–397; the sequence is STIDWNKLYR…VAITSDDESQ (70 aa). A Phosphothreonine modification is found at Thr365. A phosphoserine mark is found at Ser369 and Ser375. Position 386 is a phosphoserine; by autocatalysis and MAPKAPK2 (Ser386). Ser415 is subject to Phosphoserine. The Protein kinase 2 domain occupies 422–679; sequence YEVKEDIGVG…AALVLRHPWI (258 aa). ATP is bound by residues 428-436 and Lys451; that span reads IGVGSYSVC. Position 529 is a phosphotyrosine; by FGFR3 (Tyr529). Asp539 (proton acceptor) is an active-site residue. Residues Ser556 and Ser715 each carry the phosphoserine modification.

It belongs to the protein kinase superfamily. AGC Ser/Thr protein kinase family. S6 kinase subfamily. Forms a complex with either MAPK1/ERK2 or MAPK3/ERK1 in quiescent cells. Transiently dissociates following mitogenic stimulation. Interacts with NFATC4, ETV1/ER81 and FGFR1. It depends on Mg(2+) as a cofactor. In terms of processing, activated by phosphorylation at Ser-227 by PDPK1. Autophosphorylated on Ser-386, as part of the activation process. May be phosphorylated at Thr-365 and Ser-369 by MAPK1/ERK2 and MAPK3/ERK1. Can also be activated via phosphorylation at Ser-386 by MAPKAPK2. Post-translationally, N-terminal myristoylation results in an activated kinase in the absence of added growth factors. As to expression, expressed in many tissues, highest levels in skeletal muscle.

It localises to the nucleus. The protein resides in the cytoplasm. The enzyme catalyses L-seryl-[protein] + ATP = O-phospho-L-seryl-[protein] + ADP + H(+). It catalyses the reaction L-threonyl-[protein] + ATP = O-phospho-L-threonyl-[protein] + ADP + H(+). Upon extracellular signal or mitogen stimulation, phosphorylated at Thr-577 in the C-terminal kinase domain (CTKD) by MAPK1/ERK2 and MAPK3/ERK1. The activated CTKD then autophosphorylates Ser-386, allowing binding of PDPK1, which in turn phosphorylates Ser-227 in the N-terminal kinase domain (NTDK) leading to the full activation of the protein and subsequent phosphorylation of the substrates by the NTKD. Its function is as follows. Serine/threonine-protein kinase that acts downstream of ERK (MAPK1/ERK2 and MAPK3/ERK1) signaling and mediates mitogenic and stress-induced activation of the transcription factors CREB1, ETV1/ER81 and NR4A1/NUR77, regulates translation through RPS6 and EIF4B phosphorylation, and mediates cellular proliferation, survival, and differentiation by modulating mTOR signaling and repressing pro-apoptotic function of BAD and DAPK1. In fibroblast, is required for EGF-stimulated phosphorylation of CREB1 and histone H3 at 'Ser-10', which results in the subsequent transcriptional activation of several immediate-early genes. In response to mitogenic stimulation (EGF and PMA), phosphorylates and activates NR4A1/NUR77 and ETV1/ER81 transcription factors and the cofactor CREBBP. Upon insulin-derived signal, acts indirectly on the transcription regulation of several genes by phosphorylating GSK3B at 'Ser-9' and inhibiting its activity. Phosphorylates RPS6 in response to serum or EGF via an mTOR-independent mechanism and promotes translation initiation by facilitating assembly of the preinitiation complex. In response to insulin, phosphorylates EIF4B, enhancing EIF4B affinity for the EIF3 complex and stimulating cap-dependent translation. Is involved in the mTOR nutrient-sensing pathway by directly phosphorylating TSC2 at 'Ser-1798', which potently inhibits TSC2 ability to suppress mTOR signaling, and mediates phosphorylation of RPTOR, which regulates mTORC1 activity and may promote rapamycin-sensitive signaling independently of the PI3K/AKT pathway. Mediates cell survival by phosphorylating the pro-apoptotic proteins BAD and DAPK1 and suppressing their pro-apoptotic function. Promotes the survival of hepatic stellate cells by phosphorylating CEBPB in response to the hepatotoxin carbon tetrachloride (CCl4). Is involved in cell cycle regulation by phosphorylating the CDK inhibitor CDKN1B, which promotes CDKN1B association with 14-3-3 proteins and prevents its translocation to the nucleus and inhibition of G1 progression. In LPS-stimulated dendritic cells, is involved in TLR4-induced macropinocytosis, and in myeloma cells, acts as effector of FGFR3-mediated transformation signaling, after direct phosphorylation at Tyr-529 by FGFR3. Negatively regulates EGF-induced MAPK1/3 phosphorylation via phosphorylation of SOS1. Phosphorylates SOS1 at 'Ser-1134' and 'Ser-1161' that create YWHAB and YWHAE binding sites and which contribute to the negative regulation of MAPK1/3 phosphorylation. Phosphorylates EPHA2 at 'Ser-897', the RPS6KA-EPHA2 signaling pathway controls cell migration. Acts as a regulator of osteoblast differentiation by mediating phosphorylation of ATF4, thereby promoting ATF4 transactivation activity. This Homo sapiens (Human) protein is Ribosomal protein S6 kinase alpha-3 (RPS6KA3).